The following is a 352-amino-acid chain: MTIAVGRAPAERGWFDVLDDWLKRDRYVFVGWSGLLLFPCAYLALGGWLTGTSFVTSWYTHGIASSYLEGGNFLTVAVSTPADAFGHSLMLLWGPEAQGNFVRWCQLGGLWNFVALHGAFGLIGFMLRQFEIARLVGVRPYNAIAFSGPIAVFVSVFLMYPLGQSSWFFAPSFGVAAIFRFLLFLQGFHNWTLNPFHMMGVAGILGGALLCAIHGATVENTLFEDSEQSNTFRAFEPTQAEETYSMVTANRFWSQIFGIAFSNKRWLHFFMLFVPVTGLWMSSIGIVGLALNLRAYDFVSQELRAAEDPEFETFYTKNILLNEGIRAWMAPQDQPHEKFVFPEEVLPRGNAL.

A helical transmembrane segment spans residues 40–60 (CAYLALGGWLTGTSFVTSWYT). Position 117 (His117) interacts with chlorophyll a. Residues 124 to 140 (GFMLRQFEIARLVGVRP) traverse the membrane as a helical segment. Residues Gln129 and Asn142 each coordinate pheophytin a. Residues 152–165 (VFVSVFLMYPLGQS) form a helical membrane-spanning segment. His197 contacts chlorophyll a. Residues 207–227 (GALLCAIHGATVENTLFEDSE) traverse the membrane as a helical segment. 2 residues coordinate a plastoquinone: His214 and Phe261. His214 provides a ligand contact to Fe cation. His268 is a binding site for Fe cation. The helical transmembrane segment at 278–294 (GLWMSSIGIVGLALNLR) threads the bilayer.

The protein belongs to the reaction center PufL/M/PsbA/D family. PSII is composed of 1 copy each of membrane proteins PsbA, PsbB, PsbC, PsbD, PsbE, PsbF, PsbH, PsbI, PsbJ, PsbK, PsbL, PsbM, PsbT, PsbX, PsbY, PsbZ, Psb30/Ycf12, peripheral proteins PsbO, CyanoQ (PsbQ), PsbU, PsbV and a large number of cofactors. It forms dimeric complexes. The D1/D2 heterodimer binds P680, chlorophylls that are the primary electron donor of PSII, and subsequent electron acceptors. It shares a non-heme iron and each subunit binds pheophytin, quinone, additional chlorophylls, carotenoids and lipids. There is also a Cl(-1) ion associated with D1 and D2, which is required for oxygen evolution. The PSII complex binds additional chlorophylls, carotenoids and specific lipids. serves as cofactor.

It localises to the cellular thylakoid membrane. It carries out the reaction 2 a plastoquinone + 4 hnu + 2 H2O = 2 a plastoquinol + O2. In terms of biological role, photosystem II (PSII) is a light-driven water:plastoquinone oxidoreductase that uses light energy to abstract electrons from H(2)O, generating O(2) and a proton gradient subsequently used for ATP formation. It consists of a core antenna complex that captures photons, and an electron transfer chain that converts photonic excitation into a charge separation. The D1/D2 (PsbA/PsbD) reaction center heterodimer binds P680, the primary electron donor of PSII as well as several subsequent electron acceptors. D2 is needed for assembly of a stable PSII complex. The chain is Photosystem II D2 protein 2 from Synechococcus sp. (strain ATCC 27144 / PCC 6301 / SAUG 1402/1) (Anacystis nidulans).